A 375-amino-acid polypeptide reads, in one-letter code: EP300-interacting inhibitor of differentiation 3 (375 aa).

Positions 23-51 (AWQHLVKQEEEEAVKKEEKEEGEDEEEEG) form a coiled coil. Positions 30–68 (QEEEEAVKKEEKEEGEDEEEEGSDSSSDDPNPEPPCMHP) are disordered. Residues 42-60 (EEGEDEEEEGSDSSSDDPN) are compositionally biased toward acidic residues.

The protein belongs to the NSE4 family. In terms of assembly, component of the SMC5-SMC6 complex which consists at least of SMC5, SMC6, NSMCE2, NSMCE1, NSMCE4A or EID3 and NSMCE3; EID3 seems to be a testis-specific subunit. NSMCE1, NSMCE4A or EID3 and NSMCE3 probably form a subcomplex that bridges the head domains of the SMC5:SMC6 heterodimer. Homodimer, and heterodimer with EID2. Interacts with the C-terminal region of CREBBP.

Its subcellular location is the nucleus. The protein resides in the cytoplasm. It is found in the chromosome. It localises to the telomere. Its function is as follows. Tissue-specific component of the SMC5-SMC6 complex, a complex involved in repair of DNA double-strand breaks by homologous recombination. The complex may promote sister chromatid homologous recombination by recruiting the SMC1-SMC3 cohesin complex to double-strand breaks. The complex is required for telomere maintenance via recombination and mediates sumoylation of shelterin complex (telosome) components. In terms of biological role, acts as a repressor of nuclear receptor-dependent transcription possibly by interfering with CREBBP-dependent coactivation. May function as a coinhibitor of other CREBBP/EP300-dependent transcription factors. The protein is EP300-interacting inhibitor of differentiation 3 of Mus musculus (Mouse).